The chain runs to 106 residues: Nucleoid-associated protein bll8115 (106 aa).

It belongs to the YbaB/EbfC family. Homodimer.

It localises to the cytoplasm. The protein localises to the nucleoid. In terms of biological role, binds to DNA and alters its conformation. May be involved in regulation of gene expression, nucleoid organization and DNA protection. This is Nucleoid-associated protein bll8115 from Bradyrhizobium diazoefficiens (strain JCM 10833 / BCRC 13528 / IAM 13628 / NBRC 14792 / USDA 110).